A 392-amino-acid chain; its full sequence is MTLLGTALRPAATRVMLLGSGELGKEVAIECQRLGVEVIAVDRYADAPAMHVAHRSHVINMLDGDALRRVVELEKPHYIVPEIEAIATDMLIQLEEEGLNVVPCARATKLTMNREGIRRLAAEELQLPTSTYRFADSKSLFREAVAAIGYPCIVKPVMSSSGKGQTFIRSAEQLAQAWEYAQQGGRAGAGRVIVEGVVKFDFEITLLTVSAVDGVHFCAPVGHRQEDGDYRESWQPQQMSPLALERAQEIARKVVLALGGYGLFGVELFVCGDEVIFSEVSPRPHDTGMVTLISQDLSEFALHVRAFLGLPVGGIRQYGPAASAVILPQLTSQNVTFDNVQNAVGADLQIRLFGKPEIDGSRRLGVVLATSESVVDAIERAKHAAGQVKVQG.

Residues 22 to 23 (EL) and Glu-82 contribute to the N(1)-(5-phospho-beta-D-ribosyl)glycinamide site. Residues Arg-114, Lys-155, 160-165 (SSGKGQ), 195-198 (EGVV), and Glu-203 each bind ATP. The 190-residue stretch at 119 to 308 (RLAAEELQLP…EFALHVRAFL (190 aa)) folds into the ATP-grasp domain. Mg(2+) is bound by residues Glu-267 and Glu-279. N(1)-(5-phospho-beta-D-ribosyl)glycinamide-binding positions include Asp-286, Lys-355, and 362–363 (RR).

This sequence belongs to the PurK/PurT family. Homodimer.

The enzyme catalyses N(1)-(5-phospho-beta-D-ribosyl)glycinamide + formate + ATP = N(2)-formyl-N(1)-(5-phospho-beta-D-ribosyl)glycinamide + ADP + phosphate + H(+). It participates in purine metabolism; IMP biosynthesis via de novo pathway; N(2)-formyl-N(1)-(5-phospho-D-ribosyl)glycinamide from N(1)-(5-phospho-D-ribosyl)glycinamide (formate route): step 1/1. In terms of biological role, involved in the de novo purine biosynthesis. Catalyzes the transfer of formate to 5-phospho-ribosyl-glycinamide (GAR), producing 5-phospho-ribosyl-N-formylglycinamide (FGAR). Formate is provided by PurU via hydrolysis of 10-formyl-tetrahydrofolate. The polypeptide is Formate-dependent phosphoribosylglycinamide formyltransferase (Shigella flexneri).